The following is a 264-amino-acid chain: 3-methyl-2-oxobutanoate hydroxymethyltransferase (264 aa).

Positions 45 and 84 each coordinate Mg(2+). Residues D45–S46, D84, and K112 each bind 3-methyl-2-oxobutanoate. E114 contacts Mg(2+). Residue E181 is the Proton acceptor of the active site.

It belongs to the PanB family. Homodecamer; pentamer of dimers. It depends on Mg(2+) as a cofactor.

Its subcellular location is the cytoplasm. The enzyme catalyses 3-methyl-2-oxobutanoate + (6R)-5,10-methylene-5,6,7,8-tetrahydrofolate + H2O = 2-dehydropantoate + (6S)-5,6,7,8-tetrahydrofolate. The protein operates within cofactor biosynthesis; (R)-pantothenate biosynthesis; (R)-pantoate from 3-methyl-2-oxobutanoate: step 1/2. Its function is as follows. Catalyzes the reversible reaction in which hydroxymethyl group from 5,10-methylenetetrahydrofolate is transferred onto alpha-ketoisovalerate to form ketopantoate. The protein is 3-methyl-2-oxobutanoate hydroxymethyltransferase of Escherichia coli (strain K12 / MC4100 / BW2952).